Here is a 156-residue protein sequence, read N- to C-terminus: Aspartate carbamoyltransferase regulatory chain (156 aa).

Zn(2+) contacts are provided by Cys-109, Cys-114, Cys-140, and Cys-143.

This sequence belongs to the PyrI family. As to quaternary structure, contains catalytic and regulatory chains. It depends on Zn(2+) as a cofactor.

Involved in allosteric regulation of aspartate carbamoyltransferase. This is Aspartate carbamoyltransferase regulatory chain from Methanosarcina barkeri (strain Fusaro / DSM 804).